We begin with the raw amino-acid sequence, 393 residues long: Envelope glycoprotein D (393 aa).

An N-terminal signal peptide occupies residues 1 to 25; that stretch reads MGRLTSGVGTAALLVVAVGLRVVCA. The tract at residues 25–57 is interaction with TNFRSF14; it reads AKYALADPSLKMADPNRFRGKNLPVLDRLTDPP. Topologically, residues 26–339 are virion surface; the sequence is KYALADPSLK…HHAPAAPSNP (314 aa). Histidine 64 is a Zn(2+) binding site. Intrachain disulfides connect cysteine 91-cysteine 214, cysteine 131-cysteine 227, and cysteine 143-cysteine 152. N-linked (GlcNAc...) asparagine; by host glycans are attached at residues asparagine 119 and asparagine 146. Aspartate 240 lines the Zn(2+) pocket. Positions 261 to 305 are profusion; that stretch reads LKIAGWHGPKPPYTSTLLPPELSDTTNATQPELVPEDPEDSALLE. Residues 274-290 show a composition bias toward polar residues; that stretch reads TSTLLPPELSDTTNATQ. The disordered stretch occupies residues 274–301; that stretch reads TSTLLPPELSDTTNATQPELVPEDPEDS. Residue asparagine 287 is glycosylated (N-linked (GlcNAc...) asparagine; by host). Residues 340 to 363 form a helical membrane-spanning segment; it reads GLIIGALAGSTLAVLVIGGIAFWV. The Intravirion portion of the chain corresponds to 364 to 393; it reads RRRAQMAPKRLRLPHIRDDDAPPSHQPLFY.

Belongs to the herpesviridae glycoprotein D family. In terms of assembly, homodimer. Interacts with host receptor TNFRSF14. Interacts with host receptor NECTIN1. Interacts with host receptor NECTIN2. Interacts (via profusion domain) with gB; this interaction occurs in the absence of gH/gL. Interacts (via profusion domain) with gH/gL heterodimer; this interaction occurs in the absence of gB. Associates with the gB-gH/gL-gD complex. Interacts (via C-terminus) with UL11 tegument protein.

It is found in the virion membrane. Its function is as follows. Envelope glycoprotein that binds to the host cell entry receptors NECTIN1, NECTIN2 and TNFRSF14/HVEM, promoting the virus entry into host cells. May trigger fusion with host membrane, by recruiting the fusion machinery composed of gB and gH/gL. The chain is Envelope glycoprotein D (gD) from Homo sapiens (Human).